The primary structure comprises 27 residues: Cupiennin-3c (27 aa).

Expressed by the venom gland.

It is found in the secreted. In Cupiennius salei (American wandering spider), this protein is Cupiennin-3c.